The chain runs to 64 residues: MPKNKTHSGASKRFRVTGSGKILREKAGKRHNLEKKASKVTRRMTGTTELAKADVKRAKKMLGL.

Positions 1–15 (MPKNKTHSGASKRFR) are enriched in basic residues. A disordered region spans residues 1-20 (MPKNKTHSGASKRFRVTGSG).

Belongs to the bacterial ribosomal protein bL35 family.

The chain is Large ribosomal subunit protein bL35 from Nocardioides sp. (strain ATCC BAA-499 / JS614).